The following is a 599-amino-acid chain: Elongation factor 4 (599 aa).

In terms of domain architecture, tr-type G spans 5–187 (SHIRNFSIIA…HLVRVIPPPQ (183 aa)). Residues 17–22 (DHGKST) and 134–137 (NKMD) each bind GTP.

It belongs to the TRAFAC class translation factor GTPase superfamily. Classic translation factor GTPase family. LepA subfamily.

It is found in the cell inner membrane. The catalysed reaction is GTP + H2O = GDP + phosphate + H(+). Its function is as follows. Required for accurate and efficient protein synthesis under certain stress conditions. May act as a fidelity factor of the translation reaction, by catalyzing a one-codon backward translocation of tRNAs on improperly translocated ribosomes. Back-translocation proceeds from a post-translocation (POST) complex to a pre-translocation (PRE) complex, thus giving elongation factor G a second chance to translocate the tRNAs correctly. Binds to ribosomes in a GTP-dependent manner. In Azotobacter vinelandii (strain DJ / ATCC BAA-1303), this protein is Elongation factor 4.